A 114-amino-acid polypeptide reads, in one-letter code: Large ribosomal subunit protein P2 (114 aa).

Positions 76–91 (PAAAAAAGGGDSSSAA) are enriched in low complexity. The segment at 76 to 114 (PAAAAAAGGGDSSSAAKETKKEEPEEEEEDGDMGLSLFD) is disordered.

Belongs to the eukaryotic ribosomal protein P1/P2 family. As to quaternary structure, P1 and P2 exist as dimers at the large ribosomal subunit. In terms of processing, phosphorylated.

Plays an important role in the elongation step of protein synthesis. The chain is Large ribosomal subunit protein P2 from Eimeria tenella (Coccidian parasite).